The following is an 829-amino-acid chain: 1,4-alpha-glucan branching enzyme GlgB (829 aa).

D405 serves as the catalytic Nucleophile. Catalysis depends on E458, which acts as the Proton donor. The tract at residues 758–829 is disordered; that stretch reads ASKATKVSTK…TTAKKTKDNA (72 aa). 2 stretches are compositionally biased toward low complexity: residues 778-789 and 810-820; these read VKAATKSSVTKV and VTKTAKASAKT.

This sequence belongs to the glycosyl hydrolase 13 family. GlgB subfamily. In terms of assembly, monomer.

The enzyme catalyses Transfers a segment of a (1-&gt;4)-alpha-D-glucan chain to a primary hydroxy group in a similar glucan chain.. The protein operates within glycan biosynthesis; glycogen biosynthesis. Its function is as follows. Catalyzes the formation of the alpha-1,6-glucosidic linkages in glycogen by scission of a 1,4-alpha-linked oligosaccharide from growing alpha-1,4-glucan chains and the subsequent attachment of the oligosaccharide to the alpha-1,6 position. The chain is 1,4-alpha-glucan branching enzyme GlgB from Actinobacillus succinogenes (strain ATCC 55618 / DSM 22257 / CCUG 43843 / 130Z).